Consider the following 282-residue polypeptide: Protein GAM-1 (282 aa).

The BC-box-like signature appears at 251-260 (SLQDWARLGV).

In terms of assembly, interacts with host HDAC1. Interacts with host E1-activating enzyme (SAE1/UBA2 heterodimer). Interacts with host retinoblastoma protein. Seems to form a complex with host E4F1 and HDAC1. Seems to form complexes with either CUL2-elongin BC complex-RBX1 or CUL5-elongin BC complex-RBX1. Interacts with TCEB1/Elongin-C, CUL2 and CUL5 in vitro.

The protein localises to the host nucleus. Functionally, early protein essential for viral replication. Strong and global transcriptional activator of both viral and cellular genes. Activates transcription by blocking host retinoblastoma protein (RB) and inhibiting the SUMO pathway. Inhibition of host RB leads to the activation of E2F1-dependent transcription and, in particular, of E2F1-regulated S-phase genes. Stimulation of progression from G1 to S phase allows the virus to efficiently use the cellular DNA replicating machinery to achieve viral genome replication. Blocks the SUMO pathway by targeting the E1 enzyme (SAE1/UBA2 heterodimer) to the ubiquitin-proteasome machinery. Mediates SAE1 degradation possibly through the formation of complexes with either CUL2-elongin BC complex-RBX1 or CUL5-elongin BC complex-RBX1. The degradation of UBA2 is probably a consequent effect of SAE1 disappearance. Inhibits HDAC1 sumoylation, thereby interfering with histone deacetylation mediated by HDAC1, leading to activation of transcription. Mediates induction of heat-shock response. Seems to have an antiapoptotic function. This chain is Protein GAM-1, found in Galliformes (FAdV-1).